Here is a 279-residue protein sequence, read N- to C-terminus: Probable cyclic nucleotide phosphodiesterase Psyc_2036 (279 aa).

Fe cation-binding residues include D23, H25, D70, N100, H179, H218, and H220. Residues H25, D70, and 100–101 contribute to the AMP site; that span reads NH. Residue H220 coordinates AMP.

The protein belongs to the cyclic nucleotide phosphodiesterase class-III family. Fe(2+) serves as cofactor.

The sequence is that of Probable cyclic nucleotide phosphodiesterase Psyc_2036 from Psychrobacter arcticus (strain DSM 17307 / VKM B-2377 / 273-4).